Here is a 231-residue protein sequence, read N- to C-terminus: MEVKKLEFIGPRVMPGGQKEMDYFCQVPEFQQRCQSGNAVVIPRRDQVADGRGSTGKLFSQTLNTADTIPHCIVMFEDTYTAQSSTQPWLPISTCSVFYQLGEGVCGFGNICHGGIQTTLLDDVMGVLGVLNARLQDGIIPSKVPGAYWPRNNPGMVDLTKSLFATQGIEVKFLRPLRTPQVIEVSAQLVDMDVSGGSFTVQCVIRDMKGKQYAVANANWVIHTPRPRSRL.

It functions in the pathway secondary metabolite biosynthesis. Its function is as follows. Part of the gene cluster that mediates the biosynthesis of verlamelin, a lipopeptide that exhibits antifungal activity against plant pathogenic fungi. Verlamelin is a cyclic hexadepsipeptide and is bridged by ester bonding between a 5-hydroxytetradecanoic acid moiety and a carboxyl group on the terminal Val of amide-bonded tetradecanoyl-hexapeptide D-allo-Thr-D-Ala-L-Pro-L-Gln-D-Tyr-L-Val. VlmA and vlmB are altogether regarded as essential components in the biosynthesis of 5-hydroxytetradecanoic acid. VlmA catalyzes the hydroxylation at position C5 of tetradecanoic acid produced in primary metabolism, while the precise function of vlmB still remains to be solved. To be loaded onto the waiting NRPS, 5-hydroxytetradecanoic acid is activated in the form of acyladenylate by the AMP-dependent ligase vlmC. VlmS seems to accept the fatty-acyl intermediate onto the initial module to further elongate amino acid residues by the downstream modules. In addition, in the last module at its C-terminus, vlmS contains a surplus condensation (C) domain that may be involved in cyclization, the last step to form verlamelin. In Lecanicillium sp, this protein is Verlamelin biosynthesis protein B.